Consider the following 146-residue polypeptide: Ribosome-binding factor A (146 aa).

Positions 113-146 (IRDEREAQEPAQDPAQDSSQDASVEASDAPDKAE) are disordered.

It belongs to the RbfA family. In terms of assembly, monomer. Binds 30S ribosomal subunits, but not 50S ribosomal subunits or 70S ribosomes.

The protein resides in the cytoplasm. Functionally, one of several proteins that assist in the late maturation steps of the functional core of the 30S ribosomal subunit. Associates with free 30S ribosomal subunits (but not with 30S subunits that are part of 70S ribosomes or polysomes). Required for efficient processing of 16S rRNA. May interact with the 5'-terminal helix region of 16S rRNA. This is Ribosome-binding factor A from Gemmatimonas aurantiaca (strain DSM 14586 / JCM 11422 / NBRC 100505 / T-27).